Here is a 330-residue protein sequence, read N- to C-terminus: Ribosomal RNA small subunit methyltransferase H (330 aa).

S-adenosyl-L-methionine contacts are provided by residues 35–37 (GGY), aspartate 53, phenylalanine 80, aspartate 101, and glutamine 108.

This sequence belongs to the methyltransferase superfamily. RsmH family.

It localises to the cytoplasm. It catalyses the reaction cytidine(1402) in 16S rRNA + S-adenosyl-L-methionine = N(4)-methylcytidine(1402) in 16S rRNA + S-adenosyl-L-homocysteine + H(+). Functionally, specifically methylates the N4 position of cytidine in position 1402 (C1402) of 16S rRNA. This Rhodopseudomonas palustris (strain BisB18) protein is Ribosomal RNA small subunit methyltransferase H.